The primary structure comprises 579 residues: MSGTLMRMAGPTVVAEGLSGASLNEVVRVGEERLLGEIIRIEGDRATIQVYEETAGLALGEPVEASGEPLAVELGPGLLGSVFDGVQRPLSELAAREGDFLGRGASLPALDRTRAWEFEPAVAPGDRVEGGARLGVARAPGAPDHPVVVPPGVTGRVAEVRGGARRVDEPAVLLEGGATLALLERWPVRRPRPARRRLPPDVPFLTGQRVLDCFFPVSAGGTAVVPGGFGTGKTVLEQSLAKWAAADVVVYVGCGERGNEMSEVLDEFPRLEDPRTGGPLLARTVMIVNTSNMPVAAREASIYTGCAIAEYFRDMGRSVALMIDSTSRWAEALREISARLEEMPGEEGYPTYLASRLARFYERAGRVETLGGAEGAVTMVGAVSPPGGDLSEPVTQCSLRATGALWALSADLAHRRHYPAVDWSVSFTLEGDRLAGWFEREAGDGFGALRDEARKLLQRERELAEVAELVGTESLQDAERLVLESARLLREGFLRQSALDPADATCPPAKAFEMLRLFLEWHRRAGAAVGAGVPLRSILDTGLGARLLRLAQLPAAEVPGAAAALRADLSEALARLEAE.

An ATP-binding site is contributed by 227-234 (GGFGTGKT).

Belongs to the ATPase alpha/beta chains family.

It catalyses the reaction ATP + H2O + 4 H(+)(in) = ADP + phosphate + 5 H(+)(out). Produces ATP from ADP in the presence of a proton gradient across the membrane. The V-type alpha chain is a catalytic subunit. This chain is V-type ATP synthase alpha chain, found in Anaeromyxobacter dehalogenans (strain 2CP-1 / ATCC BAA-258).